Consider the following 360-residue polypeptide: Thiol protease SEN102 (360 aa).

Residues 1 to 20 form the signal peptide; it reads MAKPKFIALALVALSFLSIA. Positions 21–133 are cleaved as a propeptide — activation peptide; the sequence is QSIPFTEKDL…ENVGSLPAAS (113 aa). 3 disulfides stabilise this stretch: cysteine 151-cysteine 193, cysteine 185-cysteine 225, and cysteine 283-cysteine 335. Cysteine 154 is an active-site residue. Active-site residues include histidine 289 and asparagine 310. An N-linked (GlcNAc...) asparagine glycan is attached at asparagine 353. Residues 357-360 carry the Prevents secretion from ER motif; sequence RDEL.

This sequence belongs to the peptidase C1 family.

It is found in the endoplasmic reticulum lumen. This is Thiol protease SEN102 (SEN102) from Hemerocallis sp. (Daylily).